Consider the following 162-residue polypeptide: MGLETEKADVQLFMDDDAYSRHSGVDYADLDKFADSGSDRDPHRLNSHLKVGFEDVIAEPVTTHSFDKVWICSHALFEISKYVIYKFLTFFLAIPMAFAAGILFAILSCLHIWIIMPFVKTCLMVLPSVQTIWKTITDVVIAPLCTSVGRSFSSISLQLSHD.

The Cytoplasmic segment spans residues 1-86; that stretch reads MGLETEKADV…FEISKYVIYK (86 aa). Phosphotyrosine; by SRC is present on Y19. S20 and S23 each carry phosphoserine. At Y27 the chain carries Phosphotyrosine; by SRC. Position 36 is a phosphoserine (S36). Positions 87-107 form an intramembrane region, helical; sequence FLTFFLAIPMAFAAGILFAIL. Residues 108–162 are Cytoplasmic-facing; the sequence is SCLHIWIIMPFVKTCLMVLPSVQTIWKTITDVVIAPLCTSVGRSFSSISLQLSHD.

Belongs to the caveolin family. As to quaternary structure, monomer or homodimer. Interacts with CAV1; the interaction forms a stable heterooligomeric complex that is required for targeting to lipid rafts and for caveolae formation. Tyrosine phosphorylated forms do not form heterooligomers with the Tyr-19-phosphorylated form existing as a monomer or dimer, and the Tyr-27-form as a monomer only. Interacts (tyrosine phosphorylated form) with the SH2 domain-containing proteins, RASA1, NCK1 and SRC. Interacts (tyrosine phosphorylated form) with INSR, the interaction (Tyr-27-phosphorylated form) is increased on insulin stimulation. Interacts (Tyr-19 phosphorylated form) with MAPK1 (phosphorylated form); the interaction, promoted by insulin, leads to nuclear location and MAPK1 activation. Interacts with STAT3; the interaction is increased on insulin-induced tyrosine phosphorylation leading to STAT activation. Phosphorylated on serine and tyrosine residues. CAV1 promotes phosphorylation on Ser-23 which then targets the complex to the plasma membrane, lipid rafts and caveolae. Phosphorylation on Ser-36 appears to modulate mitosis in endothelial cells. Phosphorylation on both Tyr-19 and Tyr-27 is required for insulin-induced 'Ser-727' phosphorylation of STAT3 and its activation. Phosphorylation on Tyr-19 is required for insulin-induced phosphorylation of MAPK1 and DNA binding of STAT3. Tyrosine phosphorylation is induced by both EGF and insulin (By. similarity).

The protein resides in the nucleus. The protein localises to the cytoplasm. Its subcellular location is the golgi apparatus membrane. It localises to the cell membrane. It is found in the membrane. The protein resides in the caveola. Its function is as follows. May act as a scaffolding protein within caveolar membranes. Interacts directly with G-protein alpha subunits and can functionally regulate their activity. Acts as an accessory protein in conjunction with CAV1 in targeting to lipid rafts and driving caveolae formation. The Ser-36 phosphorylated form has a role in modulating mitosis in endothelial cells. Positive regulator of cellular mitogenesis of the MAPK signaling pathway. Required for the insulin-stimulated nuclear translocation and activation of MAPK1 and STAT3, and the subsequent regulation of cell cycle progression. This chain is Caveolin-2 (CAV2), found in Mustela putorius furo (European domestic ferret).